The chain runs to 449 residues: Probable glucuronosyltransferase 47 A (449 aa).

Over 1 to 31 the chain is Cytoplasmic; sequence MEHPLECADSCSLAMSWFCNKKCRGWGLMKR. A helical; Signal-anchor for type II membrane protein transmembrane segment spans residues 32–52; the sequence is TVVASGLRSVVLLLLFIYFVQ. The Lumenal segment spans residues 53 to 449; that stretch reads DVTAEMGHQR…GDLYPWGNDL (397 aa). Asparagine 172 and asparagine 433 each carry an N-linked (GlcNAc...) asparagine glycan.

Belongs to the glycosyltransferase 47 family. Mostly expressed in newly formed or expanding tissues.

The protein resides in the golgi apparatus membrane. Involved in the synthesis of glucuronoxylan hemicellulose in secondary cell walls. This chain is Probable glucuronosyltransferase 47 A, found in Physcomitrium patens (Spreading-leaved earth moss).